Reading from the N-terminus, the 339-residue chain is Methionyl-tRNA formyltransferase (339 aa).

110 to 113 (SLLP) lines the (6S)-5,6,7,8-tetrahydrofolate pocket.

Belongs to the Fmt family.

It carries out the reaction L-methionyl-tRNA(fMet) + (6R)-10-formyltetrahydrofolate = N-formyl-L-methionyl-tRNA(fMet) + (6S)-5,6,7,8-tetrahydrofolate + H(+). Its function is as follows. Attaches a formyl group to the free amino group of methionyl-tRNA(fMet). The formyl group appears to play a dual role in the initiator identity of N-formylmethionyl-tRNA by promoting its recognition by IF2 and preventing the misappropriation of this tRNA by the elongation apparatus. This Prochlorococcus marinus (strain SARG / CCMP1375 / SS120) protein is Methionyl-tRNA formyltransferase.